A 661-amino-acid chain; its full sequence is UvrABC system protein B (661 aa).

One can recognise a Helicase ATP-binding domain in the interval 25–182; it reads AGLNSKKRSQ…SDLVNLQYER (158 aa). Residue 38–45 coordinates ATP; the sequence is GITGSGKT. Positions 91-114 match the Beta-hairpin motif; that stretch reads YYDYYQPEAYIARTDTFIEKDSSI. Positions 430–592 constitute a Helicase C-terminal domain; sequence QVEDLISEIQ…IIPQTINRTI (163 aa). Residues 621–656 form the UVR domain; that stretch reads KAHIYKLKKAMLKAASNLEFEQATKLRDQLKNLEEA.

The protein belongs to the UvrB family. As to quaternary structure, forms a heterotetramer with UvrA during the search for lesions. Interacts with UvrC in an incision complex.

The protein localises to the cytoplasm. Functionally, the UvrABC repair system catalyzes the recognition and processing of DNA lesions. A damage recognition complex composed of 2 UvrA and 2 UvrB subunits scans DNA for abnormalities. Upon binding of the UvrA(2)B(2) complex to a putative damaged site, the DNA wraps around one UvrB monomer. DNA wrap is dependent on ATP binding by UvrB and probably causes local melting of the DNA helix, facilitating insertion of UvrB beta-hairpin between the DNA strands. Then UvrB probes one DNA strand for the presence of a lesion. If a lesion is found the UvrA subunits dissociate and the UvrB-DNA preincision complex is formed. This complex is subsequently bound by UvrC and the second UvrB is released. If no lesion is found, the DNA wraps around the other UvrB subunit that will check the other stand for damage. This is UvrABC system protein B from Rickettsia canadensis (strain McKiel).